Here is a 427-residue protein sequence, read N- to C-terminus: Isocitrate dehydrogenase [NADP] (427 aa).

Thr-114 contacts NADP(+). 5 residues coordinate D-threo-isocitrate: Ser-123, Asn-125, Arg-129, Arg-139, and Arg-163. Position 317 (Asp-317) interacts with Mg(2+). NADP(+)-binding positions include 349–355, Asn-362, Tyr-401, and Arg-405; that span reads HGTAPKY.

This sequence belongs to the isocitrate and isopropylmalate dehydrogenases family. As to quaternary structure, homodimer. It depends on Mg(2+) as a cofactor. The cofactor is Mn(2+).

The catalysed reaction is D-threo-isocitrate + NADP(+) = 2-oxoglutarate + CO2 + NADPH. Catalyzes the oxidative decarboxylation of isocitrate to 2-oxoglutarate and carbon dioxide with the concomitant reduction of NADP(+). The protein is Isocitrate dehydrogenase [NADP] (icd) of Coxiella burnetii (strain RSA 493 / Nine Mile phase I).